The sequence spans 216 residues: Heart- and neural crest derivatives-expressed protein 1 (216 aa).

Disordered regions lie at residues methionine 1 to histidine 20, alanine 53 to serine 109, and glutamate 165 to threonine 203. Over residues alanine 8 to proline 18 the composition is skewed to basic residues. The span at threonine 65–proline 78 shows a compositional bias: low complexity. The span at leucine 92–arginine 104 shows a compositional bias: basic residues. The bHLH domain occupies lysine 94–leucine 146. At threonine 107 the chain carries Phosphothreonine; by PLK4. Serine 109 is subject to Phosphoserine; by PLK4. Residues glutamate 165–glutamate 174 are compositionally biased toward basic and acidic residues.

In terms of assembly, efficient DNA binding requires dimerization with another bHLH protein. Forms homodimers and heterodimers with TCF3 gene products E12 and E47, HAND2 and HEY1, HEY2 and HEYL (hairy-related transcription factors). Interacts with MDFIC. Interacts with SOX15; the interaction enhances HAND1-induced differentiation of trophoblast giant cells. Post-translationally, phosphorylation by PLK4 disrupts the interaction with MDFIC and leads to translocation into the nucleoplasm, allowing dimerization and transcription factor activity. In terms of tissue distribution, smooth muscle cells of the gut and adrenal tissue.

It is found in the nucleus. Its subcellular location is the nucleoplasm. The protein localises to the nucleolus. In terms of biological role, transcription factor that plays an essential role in both trophoblast giant cell differentiation and in cardiac morphogenesis. Binds the DNA sequence 5'-NRTCTG-3' (non-canonical E-box). Acts as a transcriptional repressor of SOX15. In the adult, could be required for ongoing expression of cardiac-specific genes. This is Heart- and neural crest derivatives-expressed protein 1 (Hand1) from Mus musculus (Mouse).